The sequence spans 132 residues: MGRDTIADILTSIRNADMDKKGTVRIASTNMAESVVKILLREGFIENVRKHRENNKYFLVSTLRHRRNRKGTYRNILKRISRPGLRIYSNYQRIPRILGGMGIVILSTSRGIMTDREARLEGIGGEVLCYIW.

Belongs to the universal ribosomal protein uS8 family. In terms of assembly, part of the 30S ribosomal subunit.

The protein localises to the plastid. The protein resides in the chloroplast. One of the primary rRNA binding proteins, it binds directly to 16S rRNA central domain where it helps coordinate assembly of the platform of the 30S subunit. This Liriodendron tulipifera (Tuliptree) protein is Small ribosomal subunit protein uS8c (rps8).